A 308-amino-acid chain; its full sequence is HPr kinase/phosphorylase (308 aa).

Active-site residues include histidine 138 and lysine 159. An ATP-binding site is contributed by 153 to 160; it reads GESGLGKS. Residue serine 160 coordinates Mg(2+). The active-site Proton acceptor; for phosphorylation activity. Proton donor; for dephosphorylation activity is aspartate 177. The interval 201–210 is important for the catalytic mechanism of both phosphorylation and dephosphorylation; it reads LEVRGLGLLD. Glutamate 202 contacts Mg(2+). Arginine 243 is an active-site residue. The interval 264–269 is important for the catalytic mechanism of dephosphorylation; it reads QVAAGR.

Belongs to the HPrK/P family. Homohexamer. The cofactor is Mg(2+).

The enzyme catalyses [HPr protein]-L-serine + ATP = [HPr protein]-O-phospho-L-serine + ADP + H(+). The catalysed reaction is [HPr protein]-O-phospho-L-serine + phosphate + H(+) = [HPr protein]-L-serine + diphosphate. In terms of biological role, catalyzes the ATP- as well as the pyrophosphate-dependent phosphorylation of a specific serine residue in HPr, a phosphocarrier protein of the phosphoenolpyruvate-dependent sugar phosphotransferase system (PTS). HprK/P also catalyzes the pyrophosphate-producing, inorganic phosphate-dependent dephosphorylation (phosphorolysis) of seryl-phosphorylated HPr (P-Ser-HPr). The sequence is that of HPr kinase/phosphorylase from Bordetella avium (strain 197N).